Here is a 429-residue protein sequence, read N- to C-terminus: Gamma-glutamyl phosphate reductase (429 aa).

Belongs to the gamma-glutamyl phosphate reductase family.

It is found in the cytoplasm. It catalyses the reaction L-glutamate 5-semialdehyde + phosphate + NADP(+) = L-glutamyl 5-phosphate + NADPH + H(+). It participates in amino-acid biosynthesis; L-proline biosynthesis; L-glutamate 5-semialdehyde from L-glutamate: step 2/2. In terms of biological role, catalyzes the NADPH-dependent reduction of L-glutamate 5-phosphate into L-glutamate 5-semialdehyde and phosphate. The product spontaneously undergoes cyclization to form 1-pyrroline-5-carboxylate. This Nocardioides sp. (strain ATCC BAA-499 / JS614) protein is Gamma-glutamyl phosphate reductase.